The following is a 332-amino-acid chain: RING-H2 finger protein ATL81 (332 aa).

Residues methionine 1 to proline 19 form the signal peptide. A helical membrane pass occupies residues isoleucine 76–cysteine 96. An RING-type; atypical zinc finger spans residues cysteine 154–arginine 196.

It belongs to the RING-type zinc finger family. ATL subfamily.

It localises to the membrane. The enzyme catalyses S-ubiquitinyl-[E2 ubiquitin-conjugating enzyme]-L-cysteine + [acceptor protein]-L-lysine = [E2 ubiquitin-conjugating enzyme]-L-cysteine + N(6)-ubiquitinyl-[acceptor protein]-L-lysine.. Its pathway is protein modification; protein ubiquitination. This is RING-H2 finger protein ATL81 (ATL81) from Arabidopsis thaliana (Mouse-ear cress).